We begin with the raw amino-acid sequence, 268 residues long: Tryptophan synthase alpha chain (268 aa).

Catalysis depends on proton acceptor residues Glu-49 and Asp-60.

The protein belongs to the TrpA family. In terms of assembly, tetramer of two alpha and two beta chains.

The catalysed reaction is (1S,2R)-1-C-(indol-3-yl)glycerol 3-phosphate + L-serine = D-glyceraldehyde 3-phosphate + L-tryptophan + H2O. It functions in the pathway amino-acid biosynthesis; L-tryptophan biosynthesis; L-tryptophan from chorismate: step 5/5. Functionally, the alpha subunit is responsible for the aldol cleavage of indoleglycerol phosphate to indole and glyceraldehyde 3-phosphate. The protein is Tryptophan synthase alpha chain of Salmonella choleraesuis (strain SC-B67).